The following is a 165-amino-acid chain: Choriogonadotropin subunit beta (165 aa).

The first 20 residues, 1–20, serve as a signal peptide directing secretion; sequence METLQGLLLWLLLSMGGAQA. 6 disulfides stabilise this stretch: cysteine 29–cysteine 77, cysteine 43–cysteine 92, cysteine 46–cysteine 130, cysteine 54–cysteine 108, cysteine 58–cysteine 110, and cysteine 113–cysteine 120. Asparagine 33 and asparagine 50 each carry an N-linked (GlcNAc...) asparagine glycan. The interval 131–165 is disordered; sequence DDPNLQASSSSKDPPPSPPSPSRLLEPAGTPFLPQ. 3 O-linked (GalNAc...) serine glycosylation sites follow: serine 141, serine 147, and serine 152.

It belongs to the glycoprotein hormones subunit beta family. As to quaternary structure, heterodimer of a common alpha chain and a unique beta chain which confers biological specificity to thyrotropin, lutropin, follitropin and gonadotropin. In terms of tissue distribution, placenta.

It localises to the secreted. Stimulates the ovaries to synthesize the steroids that are essential for the maintenance of pregnancy. The protein is Choriogonadotropin subunit beta (CGB) of Papio anubis (Olive baboon).